Here is a 616-residue protein sequence, read N- to C-terminus: Chaperone protein HscA (616 aa).

Belongs to the heat shock protein 70 family.

Chaperone involved in the maturation of iron-sulfur cluster-containing proteins. Has a low intrinsic ATPase activity which is markedly stimulated by HscB. Involved in the maturation of IscU. The sequence is that of Chaperone protein HscA from Salmonella typhimurium (strain LT2 / SGSC1412 / ATCC 700720).